A 171-amino-acid polypeptide reads, in one-letter code: MKEYLTNERIRAKQVRVVGPDGKQLGIMDTREALRLAQEMDLDLVLVGPNADPPVARIMDYSKWRYEQQMAEKEARKKAKRTEVKSIKFRVKIDEHDYQTKLGHIKRFLQEGHKVKVTIMFRGREVAHPELGERILNRVTEDLKDLAVVEMKPEMLGRDMNMLLAPVKVSA.

The protein belongs to the IF-3 family. Monomer.

It is found in the cytoplasm. IF-3 binds to the 30S ribosomal subunit and shifts the equilibrium between 70S ribosomes and their 50S and 30S subunits in favor of the free subunits, thus enhancing the availability of 30S subunits on which protein synthesis initiation begins. The chain is Translation initiation factor IF-3 from Thermus thermophilus (strain ATCC BAA-163 / DSM 7039 / HB27).